We begin with the raw amino-acid sequence, 563 residues long: E3 ubiquitin-protein ligase IpaH2.5 (563 aa).

The tract at residues 1 to 270 (MIKSTNIQVI…PDYSGPQIFF (270 aa)) is interaction with target proteins. LRR repeat units lie at residues 69-90 (LQNQ…PDLP), 91-115 (PQIT…MLKV), 117-130 (HAQF…PALP), 131-150 (ETLE…PFLP), 151-170 (ENLT…PLLP), 171-195 (PELK…KLEG), 197-209 (ALAN…LPEL), and 210-233 (PFSM…VLRL). The interval 271 to 281 (SMGNSATISAP) is linker. The interval 282–563 (EHSLADAVTA…YRQLTDEVLA (282 aa)) is E3 ubiquitin-protein ligase catalytic domain. The NEL domain maps to 284-563 (SLADAVTAWF…YRQLTDEVLA (280 aa)). The active-site Glycyl thioester intermediate is cysteine 368.

The protein belongs to the LRR-containing bacterial E3 ligase family. As to quaternary structure, interacts with human RBCK1/HOIL-1 and RNF31/HOIP components of the LUBAC complex. Ubiquitinated in the presence of host E1 ubiquitin-activating enzyme, E2 ubiquitin-conjugating enzyme and ubiquitin.

The protein resides in the secreted. It localises to the host cytoplasm. It carries out the reaction S-ubiquitinyl-[E2 ubiquitin-conjugating enzyme]-L-cysteine + [acceptor protein]-L-lysine = [E2 ubiquitin-conjugating enzyme]-L-cysteine + N(6)-ubiquitinyl-[acceptor protein]-L-lysine.. It participates in protein modification; protein ubiquitination. With respect to regulation, exists in an autoinhibited state in the absence of substrate protein, probably due to interactions of the leucine-rich repeat domain with the catalytic domain. Is activated upon binding to a substrate protein. E3 ubiquitin-protein ligase effector that inhibits host cell innate immunity during bacterial infection by catalyzing 'Lys-48'-linked polyubiquitination and subsequent degradation of host RNF31/HOIP. Host RNF31/HOIP is the catalytic component of the LUBAC complex, which conjugates linear ('Met-1'-linked) polyubiquitin chains at the surface of bacteria invading the host cytosol to form the ubiquitin coat surrounding bacteria. The bacterial ubiquitin coat acts as an 'eat-me' signal for xenophagy and promotes NF-kappa-B activation. In Shigella flexneri, this protein is E3 ubiquitin-protein ligase IpaH2.5.